The primary structure comprises 80 residues: MSFEVLEQLEAKIQTAVDTIALLQMEVEELKEEKQALATEAGELKASRHELEQKTQQMQEEHSAWQDRIRNLLGKMDDVE.

Residues phenylalanine 3 to glutamate 80 adopt a coiled-coil conformation.

It belongs to the ZapB family. Homodimer. The ends of the coiled-coil dimer bind to each other, forming polymers. Interacts with FtsZ.

The protein localises to the cytoplasm. Non-essential, abundant cell division factor that is required for proper Z-ring formation. It is recruited early to the divisome by direct interaction with FtsZ, stimulating Z-ring assembly and thereby promoting cell division earlier in the cell cycle. Its recruitment to the Z-ring requires functional FtsA or ZipA. The chain is Cell division protein ZapB from Vibrio atlanticus (strain LGP32) (Vibrio splendidus (strain Mel32)).